A 215-amino-acid polypeptide reads, in one-letter code: Adenylate kinase (215 aa).

10–15 (GAGKGT) provides a ligand contact to ATP. Positions 30–59 (STGDMLRAAVKAETELGLKAKSVMDSGGLV) are NMP. AMP is bound by residues Thr31, Arg36, 57–59 (GLV), 85–88 (GFPR), and Gln92. The tract at residues 122 to 159 (GRRVHEGSGRIYHTIFNPPKVECIDDVTGEPLLQRKDD) is LID. Residues Arg123 and 132-133 (IY) contribute to the ATP site. 2 residues coordinate AMP: Arg156 and Arg167. Residue Gly201 participates in ATP binding.

The protein belongs to the adenylate kinase family. As to quaternary structure, monomer.

It localises to the cytoplasm. It carries out the reaction AMP + ATP = 2 ADP. It functions in the pathway purine metabolism; AMP biosynthesis via salvage pathway; AMP from ADP: step 1/1. Functionally, catalyzes the reversible transfer of the terminal phosphate group between ATP and AMP. Plays an important role in cellular energy homeostasis and in adenine nucleotide metabolism. The polypeptide is Adenylate kinase (Pseudomonas savastanoi pv. phaseolicola (strain 1448A / Race 6) (Pseudomonas syringae pv. phaseolicola (strain 1448A / Race 6))).